Consider the following 404-residue polypeptide: Glycosylated lysosomal membrane protein B (404 aa).

An N-terminal signal peptide occupies residues 1 to 24 (MSCTRGWRLILLGLLCVGLLGTRG). At 25–364 (QDESRKVSVQ…YGDPPRDSFS (340 aa)) the chain is on the lumenal side. N85, N124, N128, N142, N152, N156, N163, N168, N178, N189, N205, N221, N266, N303, and N330 each carry an N-linked (GlcNAc...) asparagine glycan. A helical transmembrane segment spans residues 365–385 (ILVICIMAVALGTPLLLLIIG). The Cytoplasmic portion of the chain corresponds to 386–404 (TVLVTAVRHKVYPNYQPIN). A Lysosomal targeting motif motif is present at residues 400–404 (YQPIN).

The protein belongs to the GLMP family. In terms of assembly, interacts (via lumenal domain) with lysosomal protein MFSD1; the interaction starts while both proteins are still in the endoplasmic reticulum and is required for stabilization of MFSD1 in lysosomes but has no direct effect on its targeting to lysosomes or transporter activity.

It is found in the lysosome membrane. In terms of biological role, required to protect lysosomal transporter MFSD1 from lysosomal proteolysis and for MFSD1 lysosomal localization. The chain is Glycosylated lysosomal membrane protein B (glmp-b) from Xenopus laevis (African clawed frog).